The primary structure comprises 718 residues: Zinc finger protein 39 (718 aa).

In terms of domain architecture, KRAB spans 59–130 (VSFEDVSVDF…EDVPKQSRAD (72 aa)). The segment at 298–320 (FECSICKKTFCTKCELMKHKKIH) adopts a C2H2-type 1 zinc-finger fold. The segment at 353–375 (HRCKQCEKCFHQKNQQNVHERVP) adopts a C2H2-type 2; degenerate zinc-finger fold. 11 C2H2-type zinc fingers span residues 409–431 (YGCN…QKIH), 437–459 (YGCE…QRTH), 465–487 (YECK…HRTH), 493–515 (YECD…QKVH), 521–543 (YECE…QKTH), 549–571 (YECN…QGTH), 577–599 (YQCE…QRNH), 605–627 (YACE…QRSH), 633–655 (YSCE…QRTH), 661–683 (YECK…QVTH), and 689–711 (FECQ…QRIH).

Predominantly in the spermatocytes and spermatids of testes.

The protein localises to the nucleus. In terms of biological role, a putative DNA-binding regulatory protein associated with meiosis in spermatogenesis. In Mus musculus (Mouse), this protein is Zinc finger protein 39 (Zfp39).